Consider the following 485-residue polypeptide: Sodium-coupled neutral amino acid symporter 1 (485 aa).

The Cytoplasmic portion of the chain corresponds to 1-74 (MMHFKSGLEL…EYIPGTTSLG (74 aa)). Residue Ser6 is modified to Phosphoserine. A Phosphothreonine modification is found at Thr11. Phosphoserine occurs at positions 25, 28, 49, and 52. Phosphothreonine is present on Thr54. Phosphoserine is present on Ser56. A helical membrane pass occupies residues 75–97 (MSVFNLSNAIMGSGILGLAFALA). Residues 98-112 (NTGILLFLILLTSVT) lie on the Extracellular side of the membrane. The chain crosses the membrane as a helical span at residues 113–133 (LLSIYSINLLLICSKETGCMV). Over 134–148 (YEKLGEQVFGTTGKL) the chain is Cytoplasmic. A helical membrane pass occupies residues 149–169 (VIFGATSLQNTGAMLSYLFIV). Residues 170-188 (KNELPSAIKSLMGEEETFS) are Extracellular-facing. A helical membrane pass occupies residues 189–211 (AWYVDGRVLVVMVTFGIILPLCL). Over 212–216 (LKNLG) the chain is Cytoplasmic. Residues 217-237 (YLGYTSGFSLSCMVFFLIVVI) form a helical membrane-spanning segment. Residues 238–273 (YKKFQIPCMNGEQNSTVSANVTDACTPKYVTFNSKT) lie on the Extracellular side of the membrane. Cys245 and Cys262 form a disulfide bridge. N-linked (GlcNAc...) asparagine glycosylation is found at Asn251 and Asn257. A helical transmembrane segment spans residues 274-294 (VYALPTIAFAFVCHPSVLPIY). Over 295–310 (SELKDRSQKKMQMVSN) the chain is Cytoplasmic. Residues 311–331 (ISFFAMFVMYFLTAIFGYLTF) form a helical membrane-spanning segment. The Extracellular segment spans residues 332–348 (YEKVQSDLLHKYQSTGD). A helical transmembrane segment spans residues 349-369 (ILILTVRLAVIVAVILTVPVL). Topologically, residues 370 to 391 (FFTVRSSLFELAKKTKFHLCRH) are cytoplasmic. Residues 392–412 (VLVTIILLVIINLLVIFIPSM) form a helical membrane-spanning segment. Residues 413-414 (KD) lie on the Extracellular side of the membrane. The helical transmembrane segment at 415–435 (IFGVVGVTSANMLIFILPSSL) threads the bilayer. Residues 436 to 450 (YLKITNQDGDKNTQR) lie on the Cytoplasmic side of the membrane. The helical transmembrane segment at 451–471 (IWAALFLALGVLFSLISIPLV) threads the bilayer. At 472-485 (IYDWACSSSNGEGH) the chain is on the extracellular side.

Belongs to the amino acid/polyamine transporter 2 family. In terms of processing, N-glycosylation plays an important role in the L-glutamine transport. Specifically expressed in brain with the highest levels in cerebellum and thalamus (at protein level). Expressed in glutamatergic, GABAergic and a subset of dopaminergic neurons of the substantia nigra and cholinergic motoneurons (at protein level). Also expressed by ependymal cells lining the ventricle (at protein level). Expression is also detected in spinal cord, heart, colon and placenta.

It localises to the cell membrane. The catalysed reaction is L-glutamine(in) + Na(+)(in) = L-glutamine(out) + Na(+)(out). It catalyses the reaction L-alanine(in) + Na(+)(in) = L-alanine(out) + Na(+)(out). It carries out the reaction L-asparagine(in) + Na(+)(in) = L-asparagine(out) + Na(+)(out). The enzyme catalyses L-histidine(in) + Na(+)(in) = L-histidine(out) + Na(+)(out). The catalysed reaction is L-serine(in) + Na(+)(in) = L-serine(out) + Na(+)(out). It catalyses the reaction L-cysteine(in) + Na(+)(in) = L-cysteine(out) + Na(+)(out). It carries out the reaction L-methionine(in) + Na(+)(in) = L-methionine(out) + Na(+)(out). The enzyme catalyses glycine(in) + Na(+)(in) = glycine(out) + Na(+)(out). The catalysed reaction is L-threonine(in) + Na(+)(in) = L-threonine(out) + Na(+)(out). It catalyses the reaction L-proline(in) + Na(+)(in) = L-proline(out) + Na(+)(out). With respect to regulation, inhibited by alpha-(methylamino)isobutyric acid (MeAIB). Inhibited by lithium, potassium, choline ions, N-methylglucamine. The pH dependence has an allosteric effect on the transport. Symporter that cotransports short-chain neutral amino acids and sodium ions from the extraccellular to the intracellular side of the cell membrane. The transport is elctrogenic, pH dependent and driven by the Na(+) electrochemical gradient. Participates in the astroglia-derived glutamine transport into GABAergic interneurons for neurotransmitter GABA de novo synthesis. May also contributes to amino acid transport in placental trophoblast. Regulates synaptic plasticity. In Rattus norvegicus (Rat), this protein is Sodium-coupled neutral amino acid symporter 1.